The following is a 458-amino-acid chain: Fumarate hydratase class II 2 (458 aa).

Residues 98 to 100 (SGT), 123 to 126 (NPND), 133 to 135 (SSN), and threonine 181 contribute to the substrate site. Residue histidine 182 is the Proton donor/acceptor of the active site. The active site involves serine 312. Residues serine 313 and 318-320 (KVN) each bind substrate.

It belongs to the class-II fumarase/aspartase family. Fumarase subfamily. In terms of assembly, homotetramer.

Its subcellular location is the cytoplasm. It catalyses the reaction (S)-malate = fumarate + H2O. It functions in the pathway carbohydrate metabolism; tricarboxylic acid cycle; (S)-malate from fumarate: step 1/1. Functionally, involved in the TCA cycle. Catalyzes the stereospecific interconversion of fumarate to L-malate. This Pseudomonas aeruginosa (strain ATCC 15692 / DSM 22644 / CIP 104116 / JCM 14847 / LMG 12228 / 1C / PRS 101 / PAO1) protein is Fumarate hydratase class II 2.